A 398-amino-acid chain; its full sequence is Nicotinate phosphoribosyltransferase (398 aa).

The residue at position 214 (His214) is a Phosphohistidine; by autocatalysis.

Belongs to the NAPRTase family. In terms of processing, transiently phosphorylated on a His residue during the reaction cycle. Phosphorylation strongly increases the affinity for substrates and increases the rate of nicotinate D-ribonucleotide production. Dephosphorylation regenerates the low-affinity form of the enzyme, leading to product release.

The enzyme catalyses nicotinate + 5-phospho-alpha-D-ribose 1-diphosphate + ATP + H2O = nicotinate beta-D-ribonucleotide + ADP + phosphate + diphosphate. It participates in cofactor biosynthesis; NAD(+) biosynthesis; nicotinate D-ribonucleotide from nicotinate: step 1/1. Its function is as follows. Catalyzes the synthesis of beta-nicotinate D-ribonucleotide from nicotinate and 5-phospho-D-ribose 1-phosphate at the expense of ATP. The sequence is that of Nicotinate phosphoribosyltransferase from Xanthomonas campestris pv. campestris (strain 8004).